Reading from the N-terminus, the 453-residue chain is Nuclear distribution protein PAC1 (453 aa).

The 33-residue stretch at 19–51 folds into the LisH domain; the sequence is QKDELHKSILDYFKTNNLHESFATLMREANQEG. Residues 69-96 adopt a coiled-coil conformation; it reads TSVIRLQKKIMEMESRISQLQEELSAAP. WD repeat units lie at residues 120–161, 162–201, 205–244, 247–286, 314–355, 356–395, and 413–452; these read GHRL…RTLK, GHTKAVQDVDFDSKGNYVLSCSSDLSIKVWDANNDYKNIK, GHDHSVSSVRFLPGDDYIVSASRDKTIKIWEFSTGFCTKT, GHAEWVRSAIPSDDAKWLVSCSTDQTARVWDVSSGETKVE, LDPN…KTLT, GHDNWVRGLAFSPNGKSLLSVSDDKTMRLWDLQSGRCTRT, and IEAPIPPAQDGEEAGRKQPEARTVNVVATSSVDLTIKIWT.

It belongs to the WD repeat LIS1/nudF family. In terms of assembly, self-associates. Interacts with NDL1 and dynein.

It is found in the cytoplasm. Its subcellular location is the cytoskeleton. The protein resides in the spindle pole. In terms of biological role, positively regulates the activity of the minus-end directed microtubule motor protein dynein. May enhance dynein-mediated microtubule sliding by targeting dynein to the microtubule plus end. Required for nuclear migration during vegetative growth as well as development. Required for localization of dynein to the mitotic spindle poles. Recruits additional proteins to the dynein complex at SPBs. Required for retrograde early endosome (EE) transport from the hyphal tip. The polypeptide is Nuclear distribution protein PAC1 (Mycosarcoma maydis (Corn smut fungus)).